The sequence spans 787 residues: Alpha-glucosidase 2 (787 aa).

Residues Asp-407 and Glu-410 contribute to the active site. The active-site Proton donor is Asp-484.

The protein belongs to the glycosyl hydrolase 31 family. In terms of assembly, homohexamer.

It carries out the reaction Hydrolysis of terminal, non-reducing (1-&gt;4)-linked alpha-D-glucose residues with release of alpha-D-glucose.. The polypeptide is Alpha-glucosidase 2 (Bacillus thermoamyloliquefaciens).